Consider the following 218-residue polypeptide: MVKDDKLVPSIRLLTPNELSEQWANPNSEINQITRAVLTIQGIDLKAIDLNQAAQIIYFCQANNLNPLNKEVYLIQMGNRLAPIVGIHTMTERAYRTERLVGIVQSYNDVNKSAKTILTIRSPGLKGLGTVEAEVFLSEYSTNKNLWLTKPITMLKKVSLAHALRLSGLLAFKGDTPYIYEEMQQGEAVPNKKMFTPPVAEVIEPAVENIKKVDFNEF.

This is an uncharacterized protein from Ureaplasma parvum serovar 3 (strain ATCC 700970).